The primary structure comprises 515 residues: MTLNNGGKANERGSNENPLQALSKNEAFLVPEFLDTAQSKEKAIASKVSNTLHMSTEESEFPQQVSSTPMFSENTVHPRHEVSPKPSSKNTQLKQENISKSSGYSKQTNYSNTPKSLAKTTHPKQGSTLKPATNSTHYREDDIPKSSEDIIQPKKGDRPKSSEDIIQSKKEDRPKSSEDIIQSKKEDRPKSSEDIIQSKKEDRPKSSEDIIQSKKEDRPKSSEDIIQPKKEDRPKSSEDSVPSKKGDRPKSSEDSVQPKKEDRPKSSEDSVQSKEGEVHKPLKDSIQSKETKVPKSPQDSIQSKEDKTHRPLKDSVQSKESEEPKSSHESIQSKEDKIHKPLKDSIPSKEGDIPKSPEDTIQSQEEITASEEDTIQSQEGNTIKSSEEDVQLSESKLLGLGAEIETLEEGLVRVIKDKEEFEEVLKDAGEKLVAVDFSAAWCGPCRMMKPLFHSLSLKHEDVIFLEVDTEDCEQLVQDCEIFHLPTFQFYKNEEKVGEFSGALVGKLERSISELK.

The disordered stretch occupies residues 1 to 23; that stretch reads MTLNNGGKANERGSNENPLQALS. 2 positions are modified to phosphoserine: Ser14 and Ser39. The disordered stretch occupies residues 51-390; that stretch reads TLHMSTEESE…NTIKSSEEDV (340 aa). Composition is skewed to polar residues over residues 61–75 and 85–136; these read FPQQVSSTPMFSENT and KPSS…TNST. Tandem repeats lie at residues 92 to 106, 107 to 121, 122 to 136, 137 to 151, 152 to 166, 167 to 181, 182 to 196, 197 to 211, 212 to 226, 227 to 241, 242 to 256, 257 to 271, 272 to 286, 287 to 301, 302 to 316, 317 to 331, 332 to 346, 347 to 362, 363 to 375, 376 to 390, and 391 to 405. Residues 92-405 form a 21 X 15 AA approximate tandem repeat of Q-P-K-X-G-D-I-P-K-S-[PS]-E-[KE]-X-I region; the sequence is QLKQENISKS…KLLGLGAEIE (314 aa). 2 stretches are compositionally biased toward basic and acidic residues: residues 137 to 293 and 302 to 358; these read HYRE…ETKV and QSKE…KSPE. Ser146 is modified (phosphoserine). Residues 375 to 384 show a composition bias toward polar residues; sequence IQSQEGNTIK. Residues 398-515 enclose the Thioredoxin domain; that stretch reads LGLGAEIETL…KLERSISELK (118 aa). The cysteines at positions 442 and 445 are disulfide-linked.

As to expression, testis-specific. Strongly expressed in the testicular seminiferous tubules, mostly in the round spermatids.

The protein resides in the cytoplasm. In terms of biological role, probably plays a regulatory role in sperm development. May participate in regulation of fibrous sheath (FS) assembly by supporting the formation of disulfide bonds during sperm tail morphogenesis. May also be required to rectify incorrect disulfide pairing and generate suitable pairs between the FS constituents. Can reduce disulfide bonds in vitro in the presence of NADP and thioredoxin reductase. In Mus musculus (Mouse), this protein is Thioredoxin domain-containing protein 2 (Txndc2).